Here is a 294-residue protein sequence, read N- to C-terminus: Foldase protein PrsA 1 (294 aa).

The N-terminal stretch at M1 to G21 is a signal peptide. C22 carries N-palmitoyl cysteine lipidation. C22 is lipidated: S-diacylglycerol cysteine. A PpiC domain is found at E135–K226.

Belongs to the PrsA family.

It is found in the cell membrane. The enzyme catalyses [protein]-peptidylproline (omega=180) = [protein]-peptidylproline (omega=0). Plays a major role in protein secretion by helping the post-translocational extracellular folding of several secreted proteins. This is Foldase protein PrsA 1 from Listeria monocytogenes serotype 4b (strain F2365).